Here is an 860-residue protein sequence, read N- to C-terminus: Paladin (860 aa).

Residues 1–24 (MGTTASAAPQATLHERLHSDSMTD) form a disordered region. G2 carries N-myristoyl glycine lipidation. The span at 13–24 (LHERLHSDSMTD) shows a compositional bias: basic and acidic residues.

It belongs to the paladin family.

It is found in the cytoplasm. The protein resides in the cytosol. This chain is Paladin (pald1), found in Danio rerio (Zebrafish).